Here is a 396-residue protein sequence, read N- to C-terminus: Lysophospholipid transporter LplT (396 aa).

The Periplasmic portion of the chain corresponds to Met-1–Lys-17. Residues Ala-18–Leu-38 form a helical membrane-spanning segment. The Cytoplasmic segment spans residues Ala-39–Pro-52. Residues Ile-53 to Ala-73 traverse the membrane as a helical segment. Topologically, residues Asp-74–Leu-90 are periplasmic. A helical transmembrane segment spans residues Leu-91–Val-111. Topologically, residues Gly-112 to Ala-144 are cytoplasmic. Residues Ile-145 to Val-165 traverse the membrane as a helical segment. A topological domain (periplasmic) is located at residue Ala-166. A helical membrane pass occupies residues Leu-167–Leu-187. At Ala-188–Ser-225 the chain is on the cytoplasmic side. A helical transmembrane segment spans residues Leu-226–Leu-246. At Gly-247–Thr-255 the chain is on the periplasmic side. A helical membrane pass occupies residues Tyr-256 to Val-276. Residues Thr-277–Glu-279 lie on the Cytoplasmic side of the membrane. Residues Thr-280–Leu-300 form a helical membrane-spanning segment. The Periplasmic segment spans residues Gln-301–Glu-303. A helical transmembrane segment spans residues Leu-304 to Pro-324. The Cytoplasmic portion of the chain corresponds to Leu-325–Ala-342. Residues Ile-343 to Leu-363 form a helical membrane-spanning segment. At Ala-364–Val-365 the chain is on the periplasmic side. The helical transmembrane segment at Met-366–Ile-386 threads the bilayer. The Cytoplasmic portion of the chain corresponds to Thr-387–His-396.

The protein belongs to the major facilitator superfamily. LplT (TC 2.A.1.42) family.

It is found in the cell inner membrane. Catalyzes the facilitated diffusion of 2-acyl-glycero-3-phosphoethanolamine (2-acyl-GPE) into the cell. The polypeptide is Lysophospholipid transporter LplT (Shigella flexneri serotype 5b (strain 8401)).